The primary structure comprises 278 residues: Manganese import system permease protein ScaB (278 aa).

8 consecutive transmembrane segments (helical) span residues Ala18–Leu38, Gly40–Phe60, Ile61–Ile81, Val136–Leu156, Val172–Gln192, Val194–Ala214, Met220–Tyr240, and Ile244–Ile264.

This sequence belongs to the ABC-3 integral membrane protein family.

It localises to the cell membrane. Part of an ABC transporter complex involved in manganese import. The chain is Manganese import system permease protein ScaB from Streptococcus pneumoniae.